The following is a 407-amino-acid chain: Bifunctional enzyme IspD/IspF (407 aa).

The 2-C-methyl-D-erythritol 4-phosphate cytidylyltransferase stretch occupies residues 1-247 (MVHIQADGAR…RLSHNALPDV (247 aa)). Residues 248–407 (RTGNGYDVHQ…ATVVFQGKPQ (160 aa)) form a 2-C-methyl-D-erythritol 2,4-cyclodiphosphate synthase region. Positions 254 and 256 each coordinate a divalent metal cation. 4-CDP-2-C-methyl-D-erythritol 2-phosphate is bound by residues 254–256 (DVH) and 280–281 (HS). Histidine 288 lines the a divalent metal cation pocket. 4-CDP-2-C-methyl-D-erythritol 2-phosphate contacts are provided by residues 302-304 (DIG), 378-381 (TTNE), phenylalanine 385, and arginine 388.

This sequence in the N-terminal section; belongs to the IspD/TarI cytidylyltransferase family. IspD subfamily. It in the C-terminal section; belongs to the IspF family. It depends on a divalent metal cation as a cofactor.

The enzyme catalyses 2-C-methyl-D-erythritol 4-phosphate + CTP + H(+) = 4-CDP-2-C-methyl-D-erythritol + diphosphate. It catalyses the reaction 4-CDP-2-C-methyl-D-erythritol 2-phosphate = 2-C-methyl-D-erythritol 2,4-cyclic diphosphate + CMP. It participates in isoprenoid biosynthesis; isopentenyl diphosphate biosynthesis via DXP pathway; isopentenyl diphosphate from 1-deoxy-D-xylulose 5-phosphate: step 2/6. It functions in the pathway isoprenoid biosynthesis; isopentenyl diphosphate biosynthesis via DXP pathway; isopentenyl diphosphate from 1-deoxy-D-xylulose 5-phosphate: step 4/6. In terms of biological role, bifunctional enzyme that catalyzes the formation of 4-diphosphocytidyl-2-C-methyl-D-erythritol from CTP and 2-C-methyl-D-erythritol 4-phosphate (MEP) (IspD), and catalyzes the conversion of 4-diphosphocytidyl-2-C-methyl-D-erythritol 2-phosphate (CDP-ME2P) to 2-C-methyl-D-erythritol 2,4-cyclodiphosphate (ME-CPP) with a corresponding release of cytidine 5-monophosphate (CMP) (IspF). This is Bifunctional enzyme IspD/IspF from Allorhizobium ampelinum (strain ATCC BAA-846 / DSM 112012 / S4) (Agrobacterium vitis (strain S4)).